A 408-amino-acid chain; its full sequence is Argininosuccinate synthase (408 aa).

ATP is bound at residue 8–16 (AYSGGLDTS). Y86 contributes to the L-citrulline binding site. G116 provides a ligand contact to ATP. Residues T118, N122, and D123 each contribute to the L-aspartate site. Position 122 (N122) interacts with L-citrulline. R126, S174, E259, and Y271 together coordinate L-citrulline.

This sequence belongs to the argininosuccinate synthase family. Type 1 subfamily. In terms of assembly, homotetramer.

It localises to the cytoplasm. The catalysed reaction is L-citrulline + L-aspartate + ATP = 2-(N(omega)-L-arginino)succinate + AMP + diphosphate + H(+). The protein operates within amino-acid biosynthesis; L-arginine biosynthesis; L-arginine from L-ornithine and carbamoyl phosphate: step 2/3. This is Argininosuccinate synthase from Leuconostoc mesenteroides subsp. mesenteroides (strain ATCC 8293 / DSM 20343 / BCRC 11652 / CCM 1803 / JCM 6124 / NCDO 523 / NBRC 100496 / NCIMB 8023 / NCTC 12954 / NRRL B-1118 / 37Y).